Here is a 277-residue protein sequence, read N- to C-terminus: Putative serine/threonine-protein kinase PRKY (277 aa).

A compositionally biased stretch (low complexity) spans 1–12; sequence MEAPGPAQAAAA. The interval 1–40 is disordered; that stretch reads MEAPGPAQAAAAESNSREVTEDAADWAPALCPSPEARSPE. The Protein kinase domain maps to 49–277; sequence CDALVTMGTG…DFHVKTGRMM (229 aa). Residues 55–63 and Lys-78 each bind ATP; that span reads MGTGTFGRV. Asp-172 functions as the Proton acceptor in the catalytic mechanism. Thr-203 is modified (phosphothreonine).

Belongs to the protein kinase superfamily. AGC Ser/Thr protein kinase family. cAMP subfamily. Ubiquitous.

It catalyses the reaction L-seryl-[protein] + ATP = O-phospho-L-seryl-[protein] + ADP + H(+). It carries out the reaction L-threonyl-[protein] + ATP = O-phospho-L-threonyl-[protein] + ADP + H(+). In Homo sapiens (Human), this protein is Putative serine/threonine-protein kinase PRKY (PRKY).